Reading from the N-terminus, the 323-residue chain is MFASDGNAATQWMPTGSVTVQVPGKINLYLAVGDCCDNGYHELVTVFHAVSLVDQVTVRNADVLSLGLVGEGANHVPTDEHNIAWRAAELMAEHVGRAPDVSIMIDKSIPVAGGMAGGSADAAAVLVAMNSLWELSLPRRDLCMLAAKLGSDVPFALHGGTALGTGRGEELATVLSRATFHWVLAFADSSLLTPAVYTEFDRLRDVGNPPRLAEPGPVLAALVAADPEQLAPLLGNELQAAAVSLDPALRCALRAGMEAGALAGIVSGSGPTCAFLCASATSAIDVGAQLAGAGVCRTVRVATGPVPGARVVHAPMSRGLNDM.

Residue K25 is part of the active site. An ATP-binding site is contributed by 110-120 (PVAGGMAGGSA). The active site involves D152.

This sequence belongs to the GHMP kinase family. IspE subfamily.

It catalyses the reaction 4-CDP-2-C-methyl-D-erythritol + ATP = 4-CDP-2-C-methyl-D-erythritol 2-phosphate + ADP + H(+). It functions in the pathway isoprenoid biosynthesis; isopentenyl diphosphate biosynthesis via DXP pathway; isopentenyl diphosphate from 1-deoxy-D-xylulose 5-phosphate: step 3/6. Catalyzes the phosphorylation of the position 2 hydroxy group of 4-diphosphocytidyl-2C-methyl-D-erythritol. This Mycobacterium leprae (strain Br4923) protein is 4-diphosphocytidyl-2-C-methyl-D-erythritol kinase.